The primary structure comprises 506 residues: Maturase K (506 aa).

Belongs to the intron maturase 2 family. MatK subfamily.

The protein localises to the plastid. It localises to the chloroplast. Functionally, usually encoded in the trnK tRNA gene intron. Probably assists in splicing its own and other chloroplast group II introns. This chain is Maturase K, found in Trifolium hybridum (Alsike clover).